Consider the following 149-residue polypeptide: Transcriptional repressor NrdR (149 aa).

A zinc finger lies at 3-34 (CPFCTAKDTKVIDSRLVGGGHQVRRRRECNDC). Residues 49 to 139 (PRVIKQDGSR…VYRSFEDIRE (91 aa)) form the ATP-cone domain.

This sequence belongs to the NrdR family. The cofactor is Zn(2+).

Functionally, negatively regulates transcription of bacterial ribonucleotide reductase nrd genes and operons by binding to NrdR-boxes. This chain is Transcriptional repressor NrdR, found in Pseudoalteromonas translucida (strain TAC 125).